A 183-amino-acid chain; its full sequence is Acireductone dioxygenase (183 aa).

Residues His99, His101, Glu105, and His144 each coordinate Fe(2+). The Ni(2+) site is built by His99, His101, Glu105, and His144.

The protein belongs to the acireductone dioxygenase (ARD) family. As to quaternary structure, monomer. Fe(2+) is required as a cofactor. The cofactor is Ni(2+).

The enzyme catalyses 1,2-dihydroxy-5-(methylsulfanyl)pent-1-en-3-one + O2 = 3-(methylsulfanyl)propanoate + CO + formate + 2 H(+). It carries out the reaction 1,2-dihydroxy-5-(methylsulfanyl)pent-1-en-3-one + O2 = 4-methylsulfanyl-2-oxobutanoate + formate + 2 H(+). Its pathway is amino-acid biosynthesis; L-methionine biosynthesis via salvage pathway; L-methionine from S-methyl-5-thio-alpha-D-ribose 1-phosphate: step 5/6. In terms of biological role, catalyzes 2 different reactions between oxygen and the acireductone 1,2-dihydroxy-3-keto-5-methylthiopentene (DHK-MTPene) depending upon the metal bound in the active site. Fe-containing acireductone dioxygenase (Fe-ARD) produces formate and 2-keto-4-methylthiobutyrate (KMTB), the alpha-ketoacid precursor of methionine in the methionine recycle pathway. Ni-containing acireductone dioxygenase (Ni-ARD) produces methylthiopropionate, carbon monoxide and formate, and does not lie on the methionine recycle pathway. The polypeptide is Acireductone dioxygenase (Microcystis aeruginosa).